The sequence spans 100 residues: Small ribosomal subunit protein bS6 (100 aa).

The protein belongs to the bacterial ribosomal protein bS6 family.

Functionally, binds together with bS18 to 16S ribosomal RNA. The polypeptide is Small ribosomal subunit protein bS6 (Enterococcus faecalis (strain ATCC 700802 / V583)).